Consider the following 326-residue polypeptide: Flavanone 3-dioxygenase 3 (326 aa).

The segment covering M1 to S15 has biased composition (polar residues). Residues M1 to P21 are disordered. The Fe2OG dioxygenase domain maps to E175 to F276. Fe cation contacts are provided by H200, D202, and H257. Residue R267 coordinates 2-oxoglutarate.

This sequence belongs to the iron/ascorbate-dependent oxidoreductase family. It depends on Fe(2+) as a cofactor. L-ascorbate serves as cofactor. Expressed at very low levels in roots, leaves, stems and seeds.

The enzyme catalyses a (2S)-flavan-4-one + 2-oxoglutarate + O2 = a (2R,3R)-dihydroflavonol + succinate + CO2. Its pathway is secondary metabolite biosynthesis; flavonoid biosynthesis. Its function is as follows. Catalyzes the 3-beta-hydroxylation of 2S-flavanones to 2R,3R-dihydroflavonols which are intermediates in the biosynthesis of flavonols, anthocyanidins, catechins and proanthocyanidins in plants. Converts (2S)-eriodictyol to (+)-taxifolin and (2S)-naringenin to (+)-(2R/3R)-dihydrokaempferol in vitro. This Oryza sativa subsp. japonica (Rice) protein is Flavanone 3-dioxygenase 3.